We begin with the raw amino-acid sequence, 148 residues long: D-aminoacyl-tRNA deacylase (148 aa).

Residues 136 to 137 (GP) carry the Gly-cisPro motif, important for rejection of L-amino acids motif.

Belongs to the DTD family. In terms of assembly, homodimer.

The protein resides in the cytoplasm. The catalysed reaction is glycyl-tRNA(Ala) + H2O = tRNA(Ala) + glycine + H(+). The enzyme catalyses a D-aminoacyl-tRNA + H2O = a tRNA + a D-alpha-amino acid + H(+). An aminoacyl-tRNA editing enzyme that deacylates mischarged D-aminoacyl-tRNAs. Also deacylates mischarged glycyl-tRNA(Ala), protecting cells against glycine mischarging by AlaRS. Acts via tRNA-based rather than protein-based catalysis; rejects L-amino acids rather than detecting D-amino acids in the active site. By recycling D-aminoacyl-tRNA to D-amino acids and free tRNA molecules, this enzyme counteracts the toxicity associated with the formation of D-aminoacyl-tRNA entities in vivo and helps enforce protein L-homochirality. The polypeptide is D-aminoacyl-tRNA deacylase (Kosmotoga olearia (strain ATCC BAA-1733 / DSM 21960 / TBF 19.5.1)).